Here is a 340-residue protein sequence, read N- to C-terminus: MKALVKREANKGIWLEQVPVPTPGPNEVLIKLEKTAICGTDLHIYLWDEWSQRTIEPGLTIGHEFVGRVAELGSAVTGYQIGQRVSAEGHIVCGHCRNCRGGRPHLCPNTVGIGVNVNGAFAEYMVMPASNLWPIPDQIPSELAAFFDPYGNAAHCALEFDVIGEDVLITGAGPIGIIAAGICKHIGARNVVVTDVNDFRLKLAADMGATRVVNVSKTSLKDVMADLHMEGFDVGLEMSGNSRAFNDMLDCMYHGGKIAMLGIMPRGAGCDWDKIIFKGLTVQGIYGRKMYETWYKMTQLVLSGFPLHKVLTHQLPIDDFQKGFDLMEEGKAGKVVLSWN.

A Zn(2+)-binding site is contributed by cysteine 38. Active-site charge relay system residues include threonine 40 and histidine 43. Zn(2+) is bound by residues histidine 63, glutamate 64, cysteine 93, cysteine 96, cysteine 99, and cysteine 107. Residues isoleucine 175, aspartate 195, arginine 200, 261-263, and 285-286 each bind NAD(+); these read LGI and IY.

It belongs to the zinc-containing alcohol dehydrogenase family. As to quaternary structure, homotetramer. Zn(2+) is required as a cofactor.

It localises to the cytoplasm. It carries out the reaction L-threonine + NAD(+) = (2S)-2-amino-3-oxobutanoate + NADH + H(+). It participates in amino-acid degradation; L-threonine degradation via oxydo-reductase pathway; glycine from L-threonine: step 1/2. Its function is as follows. Catalyzes the NAD(+)-dependent oxidation of L-threonine to 2-amino-3-ketobutyrate. In Xanthomonas axonopodis pv. citri (strain 306), this protein is L-threonine 3-dehydrogenase.